The chain runs to 334 residues: Serine/Arginine-related protein 53 (334 aa).

Basic and acidic residues predominate over residues 1–13 (MGRRSSDTEEESR). Disordered stretches follow at residues 1 to 173 (MGRR…IKAG), 201 to 222 (LKAK…QATL), and 241 to 290 (VQQT…SIPT). Residues 14-24 (SKRKKKHRRRS) show a composition bias toward basic residues. A compositionally biased stretch (basic and acidic residues) spans 44–62 (PRSESRSWSRDRQPRSHSY). Over residues 78 to 118 (SRRKRSRSRSRGRGKSYRVQRSRSKSRTRRSRSRPRPRSHS) the composition is skewed to basic residues. 3 stretches are compositionally biased toward basic and acidic residues: residues 132-166 (RSRD…KRGD), 201-218 (LKAK…KEED), and 247-262 (SSKD…EVKH). Positions 180–234 (AEQAKARLQLVLEAAAKADEALKAKERNEEEAKRRKEEDQATLGEQVKRVKEIEA) form a coiled coil.

Interacts (via Arg/Ser-rich domain) with LUC7L3, RBM39 and RSF1. Post-translationally, phosphorylated.

It is found in the nucleus speckle. The protein localises to the nucleus. It localises to the cytoplasm. In terms of biological role, plays a role in pre-mRNA splicing. Involved in both constitutive and alternative pre-mRNA splicing. May have a role in the recognition of the 3' splice site during the second step of splicing. This is Serine/Arginine-related protein 53 (Rsrc1) from Rattus norvegicus (Rat).